The chain runs to 209 residues: Superoxide dismutase [Mn/Fe] (209 aa).

Fe(3+) contacts are provided by H38, H90, D172, and H176. The Mn(2+) site is built by H38, H90, D172, and H176.

This sequence belongs to the iron/manganese superoxide dismutase family. Mn(2+) serves as cofactor. It depends on Fe(3+) as a cofactor.

It carries out the reaction 2 superoxide + 2 H(+) = H2O2 + O2. Its function is as follows. Destroys superoxide anion radicals which are normally produced within the cells and which are toxic to biological systems. Catalyzes the dismutation of superoxide anion radicals into O2 and H2O2 by successive reduction and oxidation of the transition metal ion at the active site. In Rickettsia prowazekii (strain Madrid E), this protein is Superoxide dismutase [Mn/Fe] (sodB).